Here is a 529-residue protein sequence, read N- to C-terminus: Inosine-5'-monophosphate dehydrogenase (529 aa).

CBS domains are found at residues 129 to 185 (MVTD…SKQV) and 189 to 246 (MTKA…PLAT). NAD(+) contacts are provided by residues Asp283 and 334 to 336 (GVG). 2 residues coordinate K(+): Gly336 and Gly338. Ser339 contacts IMP. Residue Cys341 coordinates K(+). Catalysis depends on Cys341, which acts as the Thioimidate intermediate. Residues 374–376 (DGG), 397–398 (GS), and 421–425 (YRGMG) each bind IMP. Catalysis depends on Arg443, which acts as the Proton acceptor. Residue Glu458 participates in IMP binding. Residues Glu511, Ser512, and His513 each contribute to the K(+) site.

The protein belongs to the IMPDH/GMPR family. As to quaternary structure, homotetramer. K(+) serves as cofactor.

The enzyme catalyses IMP + NAD(+) + H2O = XMP + NADH + H(+). It participates in purine metabolism; XMP biosynthesis via de novo pathway; XMP from IMP: step 1/1. Its activity is regulated as follows. Mycophenolic acid (MPA) is a non-competitive inhibitor that prevents formation of the closed enzyme conformation by binding to the same site as the amobile flap. In contrast, mizoribine monophosphate (MZP) is a competitive inhibitor that induces the closed conformation. MPA is a potent inhibitor of mammalian IMPDHs but a poor inhibitor of the bacterial enzymes. MZP is a more potent inhibitor of bacterial IMPDH. Functionally, catalyzes the conversion of inosine 5'-phosphate (IMP) to xanthosine 5'-phosphate (XMP), the first committed and rate-limiting step in the de novo synthesis of guanine nucleotides, and therefore plays an important role in the regulation of cell growth. This is Inosine-5'-monophosphate dehydrogenase from Mycobacterium bovis (strain ATCC BAA-935 / AF2122/97).